A 185-amino-acid polypeptide reads, in one-letter code: Probable chorismate pyruvate-lyase 2 (185 aa).

The substrate site is built by Arg80, Leu118, and Glu170.

It belongs to the UbiC family.

The protein localises to the cytoplasm. It carries out the reaction chorismate = 4-hydroxybenzoate + pyruvate. The protein operates within cofactor biosynthesis; ubiquinone biosynthesis. In terms of biological role, removes the pyruvyl group from chorismate, with concomitant aromatization of the ring, to provide 4-hydroxybenzoate (4HB) for the ubiquinone pathway. The sequence is that of Probable chorismate pyruvate-lyase 2 from Pseudomonas entomophila (strain L48).